Consider the following 505-residue polypeptide: DNA primase DnaG (505 aa).

Positions 167–241 (DAVIVVEGRA…DVDYVAFAPP (75 aa)) constitute a Toprim domain. Glutamate 173, aspartate 215, and aspartate 217 together coordinate Mg(2+). The tract at residues 268 to 410 (DEPNLREAAT…PLDNEPRSIE (143 aa)) is disordered. Residues 318–327 (AGVVAGGARS) show a composition bias toward low complexity. Composition is skewed to acidic residues over residues 349-376 (GEVD…DAEF) and 384-402 (PNLD…DAPL).

This sequence belongs to the archaeal DnaG primase family. As to quaternary structure, forms a ternary complex with MCM helicase and DNA. Requires Mg(2+) as cofactor.

It carries out the reaction ssDNA + n NTP = ssDNA/pppN(pN)n-1 hybrid + (n-1) diphosphate.. In terms of biological role, RNA polymerase that catalyzes the synthesis of short RNA molecules used as primers for DNA polymerase during DNA replication. The polypeptide is DNA primase DnaG (Halorubrum lacusprofundi (strain ATCC 49239 / DSM 5036 / JCM 8891 / ACAM 34)).